We begin with the raw amino-acid sequence, 226 residues long: Beta-casein (226 aa).

The segment at 1 to 51 is disordered; the sequence is REKEELNVSSETVESLSSNEPDSSSEESITHINKEKSQKFKHEGQQQREVE. Ser-9 bears the Phosphoserine mark. Thr-12 is subject to Phosphothreonine. Residues Ser-15, Ser-17, Ser-18, and Ser-25 each carry the phosphoserine modification. A compositionally biased stretch (basic and acidic residues) spans 28–51; sequence SITHINKEKSQKFKHEGQQQREVE.

This sequence belongs to the beta-casein family. In terms of processing, there are at least three different forms found in milk, with varying degrees of phosphorylation. These include form 5-P which is phosphorylated at three sites, this form is present in low amounts, form 6-P which is phosphorylated at six sites, and form 7-P which is phosphorylated at seven sites. In terms of tissue distribution, mammary gland specific. Secreted in milk.

It localises to the secreted. Functionally, important role in determination of the surface properties of the casein micelles. The sequence is that of Beta-casein from Equus asinus (Donkey).